The chain runs to 613 residues: Proton myo-inositol cotransporter hmit-1.2 (613 aa).

Residues 1-21 lie on the Cytoplasmic side of the membrane; sequence MVAVEFKVSESGRPRPEKNPK. A helical membrane pass occupies residues 22-42; it reads LGFFVYLLGSAAIIGGFLFGY. Residues 43 to 69 lie on the Extracellular side of the membrane; sequence DTSVVSAAMLYVPEAPGLKPMGTVWKE. The helical transmembrane segment at 70–90 threads the bilayer; that stretch reads VIVSITPGMAAVGAWFSGAGS. The Cytoplasmic portion of the chain corresponds to 91 to 96; that stretch reads DRYGRK. Residues 97-117 traverse the membrane as a helical segment; it reads PIIIGSTLIFVCGAVICAVAW. The Extracellular segment spans residues 118-119; the sequence is TK. A helical membrane pass occupies residues 120–140; sequence IVMLIGRIFLGVGIGFASMVV. The Cytoplasmic portion of the chain corresponds to 141 to 157; sequence PVYLGEASPTHVRGTLV. A helical transmembrane segment spans residues 158–178; that stretch reads SAFAMMISFGQVVANIMGGVF. Over 179-189 the chain is Extracellular; sequence SYWEPYTIGWR. A helical transmembrane segment spans residues 190–210; it reads LMFAFAGIPALIQFVCFIFLP. Residues 211–279 lie on the Cytoplasmic side of the membrane; that stretch reads ETPRWLYENG…RILKTPHVLK (69 aa). Residues 280 to 300 traverse the membrane as a helical segment; that stretch reads ACFIGSMLQAFQQLAGINTIL. Topologically, residues 301–317 are extracellular; it reads YYTADIIRSAGIENYHT. Residues 318–338 traverse the membrane as a helical segment; that stretch reads IIWISVILSICNLIGPFAPMF. Topologically, residues 339–347 are cytoplasmic; that stretch reads FIEKLGRRK. The chain crosses the membrane as a helical span at residues 348–368; sequence LFLFSCAGVVVSLVLIGVSFL. Topologically, residues 369-472 are extracellular; it reads LVGNDSAPNF…QKHHCTTSYT (104 aa). N-linked (GlcNAc...) asparagine glycosylation is found at asparagine 372, asparagine 451, and asparagine 456. A helical transmembrane segment spans residues 473 to 493; sequence ILPIVMMGVYLLTFSCGFTSL. At 494 to 515 the chain is on the cytoplasmic side; sequence PWVLNSEFYPMWARSTCVSIST. The chain crosses the membrane as a helical span at residues 516–536; sequence LSNWVFNLIIALTYLSLTHAI. At 537 to 539 the chain is on the extracellular side; sequence TKY. Residues 540-560 traverse the membrane as a helical segment; sequence GAFWLYAIFTIIAFIFIYFLV. Residues 561–613 lie on the Cytoplasmic side of the membrane; it reads PETTGYSIDEVEMLFMNKRQRNIAMQARQAKLDAASDKDKNSSTSLSTETITM. The segment at 594-613 is disordered; that stretch reads AASDKDKNSSTSLSTETITM. The segment covering 602–613 has biased composition (polar residues); sequence SSTSLSTETITM.

Belongs to the major facilitator superfamily. Sugar transporter (TC 2.A.1.1) family. Expressed in the excretory canal cell and in pairs of amphid and sheath glia.

The protein localises to the cell membrane. It is found in the perikaryon. The enzyme catalyses myo-inositol(out) + H(+)(out) = myo-inositol(in) + H(+)(in). Its function is as follows. H(+)-myo-inositol cotransporter. Probably by promoting the transport of myo-inositol regulates intracellular osmosis in response to hyperosmotic stress. The polypeptide is Proton myo-inositol cotransporter hmit-1.2 (Caenorhabditis elegans).